A 429-amino-acid polypeptide reads, in one-letter code: Histidinol dehydrogenase (429 aa).

Residues Tyr130, Gln191, and Asn214 each coordinate NAD(+). Substrate is bound by residues Ser237, Gln259, and His262. Positions 259 and 262 each coordinate Zn(2+). Residues Glu327 and His328 each act as proton acceptor in the active site. Substrate is bound by residues His328, Asp361, Glu415, and His420. Residue Asp361 coordinates Zn(2+). Position 420 (His420) interacts with Zn(2+).

This sequence belongs to the histidinol dehydrogenase family. The cofactor is Zn(2+).

It carries out the reaction L-histidinol + 2 NAD(+) + H2O = L-histidine + 2 NADH + 3 H(+). It functions in the pathway amino-acid biosynthesis; L-histidine biosynthesis; L-histidine from 5-phospho-alpha-D-ribose 1-diphosphate: step 9/9. In terms of biological role, catalyzes the sequential NAD-dependent oxidations of L-histidinol to L-histidinaldehyde and then to L-histidine. This is Histidinol dehydrogenase from Neisseria meningitidis serogroup A / serotype 4A (strain DSM 15465 / Z2491).